Reading from the N-terminus, the 247-residue chain is Phosphoribosylaminoimidazole-succinocarboxamide synthase (247 aa).

This sequence belongs to the SAICAR synthetase family.

It carries out the reaction 5-amino-1-(5-phospho-D-ribosyl)imidazole-4-carboxylate + L-aspartate + ATP = (2S)-2-[5-amino-1-(5-phospho-beta-D-ribosyl)imidazole-4-carboxamido]succinate + ADP + phosphate + 2 H(+). Its pathway is purine metabolism; IMP biosynthesis via de novo pathway; 5-amino-1-(5-phospho-D-ribosyl)imidazole-4-carboxamide from 5-amino-1-(5-phospho-D-ribosyl)imidazole-4-carboxylate: step 1/2. The sequence is that of Phosphoribosylaminoimidazole-succinocarboxamide synthase from Methanopyrus kandleri (strain AV19 / DSM 6324 / JCM 9639 / NBRC 100938).